The following is a 241-amino-acid chain: MAGHSKWANIQHRKGRQDAKRGKVFTKLIKEITVAARMGGGDPNFNPRLRLAVDKAKAENMPSENIDRAIKRGTGELDGVSYEEARYEGYGIGGAAVMVDCLTDNKTRTVADVRHAFSKNGGNMGTDGCVAFQFKHCGQLMFAPGTSEDALMEAALEAGAEDVVTNDDGSIEVITAPYEYSNVKDALEKASFRAEFGEVTMKPQNETELSGGDAERMQKLLDALESLDDVQEVYTSAVMDE.

The interval 1–21 (MAGHSKWANIQHRKGRQDAKR) is disordered.

This sequence belongs to the TACO1 family.

It is found in the cytoplasm. The chain is Probable transcriptional regulatory protein AZOSEA20720 from Aromatoleum aromaticum (strain DSM 19018 / LMG 30748 / EbN1) (Azoarcus sp. (strain EbN1)).